We begin with the raw amino-acid sequence, 831 residues long: Prolactin receptor (831 aa).

Positions 1 to 23 (MKQDLISSVQIILFLPLTTVGLA) are cleaved as a signal peptide. Over 24 to 438 (GQSFPGKPKI…QIPNDFRVKD (415 aa)) the chain is Extracellular. Fibronectin type-III domains follow at residues 30-128 (KPKI…VQPG), 129-227 (SPVN…IPSG), 230-331 (PPEK…VQPD), and 332-433 (PPVN…IPND). A disulfide bridge links cysteine 36 with cysteine 46. An N-linked (GlcNAc...) asparagine glycan is attached at asparagine 59. A disulfide bridge connects residues cysteine 75 and cysteine 86. N-linked (GlcNAc...) asparagine glycans are attached at residues asparagine 91, asparagine 100, asparagine 112, asparagine 132, asparagine 262, asparagine 303, asparagine 315, and asparagine 335. The Zn(2+) site is built by aspartate 414 and histidine 416. Residues 419–423 (WSEWS) carry the WSXWS motif motif. The helical transmembrane segment at 439-459 (MIVWIVLGVLSSLICLIMSWT) threads the bilayer. Residues 460–831 (MVLKGYRMIT…DPSSFMPSFK (372 aa)) lie on the Cytoplasmic side of the membrane. The Box 1 motif motif lies at 471–479 (MLPPVPGPK). 3 disordered regions span residues 527 to 563 (QQLMPSHDNGHPSKNAKITRKETDSDSGRGSCDSPSL), 774 to 796 (RVPHTPASQEPAKETSQSLQQGQ), and 808 to 831 (PSDCKRETGGSEYMDPSSFMPSFK). Over residues 787–796 (ETSQSLQQGQ) the composition is skewed to polar residues.

The protein belongs to the type I cytokine receptor family. Type 1 subfamily.

The protein localises to the membrane. This is a receptor for the anterior pituitary hormone prolactin. The protein is Prolactin receptor (PRLR) of Gallus gallus (Chicken).